The primary structure comprises 194 residues: 3-isopropylmalate dehydratase small subunit (194 aa).

The protein belongs to the LeuD family. LeuD type 1 subfamily. As to quaternary structure, heterodimer of LeuC and LeuD.

The catalysed reaction is (2R,3S)-3-isopropylmalate = (2S)-2-isopropylmalate. It participates in amino-acid biosynthesis; L-leucine biosynthesis; L-leucine from 3-methyl-2-oxobutanoate: step 2/4. Catalyzes the isomerization between 2-isopropylmalate and 3-isopropylmalate, via the formation of 2-isopropylmaleate. The protein is 3-isopropylmalate dehydratase small subunit of Limosilactobacillus fermentum (strain NBRC 3956 / LMG 18251) (Lactobacillus fermentum).